The chain runs to 365 residues: Aminotransferase poxL (365 aa).

Arginine 92 is a binding site for pyridoxal 5'-phosphate. The residue at position 193 (lysine 193) is an N6-(pyridoxal phosphate)lysine. Pyridoxal 5'-phosphate is bound at residue glutamate 229.

The protein belongs to the class-IV pyridoxal-phosphate-dependent aminotransferase family. It depends on pyridoxal 5'-phosphate as a cofactor.

The protein operates within secondary metabolite biosynthesis. Functionally, aminotransferase; part of the gene cluster that mediates the biosynthesis of oxaleimides, cytotoxic compounds containing an unusual disubstituted succinimide moiety. The first step of the pathway is provided by the HR-PKS poxF that serves in a new mode of collaborative biosynthesis with the PKS-NRPS poxE, by providing the olefin containing amino acid substrate via the synthesis of an ACP-bound dec-4-enoate. The cytochrome P450 monooxygenase poxM-catalyzed oxidation at the alpha-position creates the enzyme-bound 2-hydroxydec-4-enoyl-ACP thioester, which may be prone to spontaneous hydrolysis to yield 2-hydroxydec-4-enoic acid due to increased electrophilicity of the carbonyl. 2-hydroxydec-4-enoic acid can then be further oxidized by poxM to yield the alpha-ketoacid 2-oxodec-4-enoicacid, which is reductively aminated by the aminotransferase poxL to yield (S,E)-2-aminodec-4-enoic acid. The Hybrid PKS-NRPS synthetase poxE then performs condensation between the octaketide product of its PKS modules and the amino group of (S,E)-2-aminodec-4-enoic acid which is activated and incorporated by the adenylation domain. The resulting aminoacyl product can be cyclized by the Diels-Alderase PoxQ and reductively released by the reductive (R) domain of poxE to yield an aldehyde intermediate. The released aldehyde is then substrate for a Knoevenagel condensation by the hydrolyase poxO followed by an oxidation at the 5-position of the pyrrolidone ring. The presence of the olefin from the amino acid building block allows for migration of the substituted allyl group to occur. This allylic transposition reaction takes place in a conjugate addition, semipinacol-like fashion to yield a succinimide intermediate. Iterative two-electron oxidations of the C7 methyl of the succinimide intermediate to the carboxylic acid can be catalyzed by one of two remaining cytochrome P450 monooxygenasess poxC or poxD to yield oxaleimide A. Subsequent oxidation yields the maleimide scaffold oxaleimide I. Both oxaleimide A and oxaleimide I can undergo oxidative modifications in the decalin ring to yield the series of products oxaleimides B to H. This Penicillium oxalicum (strain 114-2 / CGMCC 5302) (Penicillium decumbens) protein is Aminotransferase poxL.